A 205-amino-acid polypeptide reads, in one-letter code: Protein N-terminal glutamine amidohydrolase (205 aa).

Active-site residues include C20, H74, and D90.

Belongs to the NTAQ1 family. In terms of assembly, monomer.

The catalysed reaction is N-terminal L-glutaminyl-[protein] + H2O = N-terminal L-glutamyl-[protein] + NH4(+). Its function is as follows. Mediates the side-chain deamidation of N-terminal glutamine residues to glutamate, an important step in N-end rule pathway of protein degradation. Conversion of the resulting N-terminal glutamine to glutamate renders the protein susceptible to arginylation, polyubiquitination and degradation as specified by the N-end rule. Does not act on substrates with internal or C-terminal glutamine and does not act on non-glutamine residues in any position. This is Protein N-terminal glutamine amidohydrolase (tun) from Drosophila pseudoobscura pseudoobscura (Fruit fly).